The sequence spans 2079 residues: von Willebrand factor A domain-containing protein DDB_G0286969 (2079 aa).

One can recognise a VIT domain in the interval 11–147; it reads EQILPSFISI…ELEIIITYST (137 aa). Positions 178–203 are disordered; the sequence is NENSTTNTNTQTQPQSVNTTTTTTPS. Over residues 180-203 the composition is skewed to low complexity; the sequence is NSTTNTNTQTQPQSVNTTTTTTPS. A VWFA domain is found at 354–525; it reads ELIFLVDVSE…KVMRQLKRAL (172 aa). 5 disordered regions span residues 761–800, 832–866, 956–1139, 1155–1203, and 1239–1294; these read PTTLSGSGIPFYNPSSPNHDRNINTTQQPTPTQSTPLKTP, PFVPSPNKLPTTTTSAPATTPITTPAPTTTTTEVK, AKPV…TKPT, NEPA…VSST, and DSNT…ADAE. Composition is skewed to low complexity over residues 785–800, 841–866, and 956–973; these read TTQQPTPTQSTPLKTP, PTTTTSAPATTPITTPAPTTTTTEVK, and AKPVEPAVVQQQQPQQTK. Positions 923–957 form a coiled coil; it reads EMIKIAEAKAAAEQKAAAEQKAIADAKAAAEQAAK. Positions 974–989 are enriched in basic and acidic residues; it reads PKADKQSKQNAKDNKQ. Positions 992–1006 are enriched in low complexity; sequence KPVVVEQKPPVVTET. Residues 1007 to 1021 are compositionally biased toward polar residues; the sequence is KPTVATESATPTKPT. The segment covering 1023 to 1061 has biased composition (low complexity); that stretch reads AQAAAAAAAAAQQAAQQAAATTPVKQQPTKQTTPNKSTP. Residues 1092–1111 show a composition bias toward basic and acidic residues; the sequence is KPVETKPVEQTKPVETKPVE. A compositionally biased stretch (low complexity) spans 1176–1198; the sequence is NNNNNNNNNNNNNNNNNNNNNNN. Polar residues predominate over residues 1239–1272; it reads DSNTKAPDSLKTTPIFSNGPQGISPSSGNGSNKS. Positions 1280–1292 are enriched in basic and acidic residues; it reads DRGGRGGRDRNAD. The MIF4G domain occupies 1317 to 1527; the sequence is LKKFKFNLNR…LDLIDLRANK (211 aa). The segment at 1530-1755 is disordered; it reads PKNSTQTKTK…PAPVEPVKPK (226 aa). 3 stretches are compositionally biased toward basic and acidic residues: residues 1538-1550, 1557-1599, and 1621-1634; these read TKKDESDKEERFI, QKRE…RDAP, and NNRDKGGRGGDRSG. 2 stretches are compositionally biased toward low complexity: residues 1635–1659 and 1688–1699; these read GKQSPSGKKDSGFGPSSGGSSLFGS and SSSIPSIPNRSN. The segment covering 1725 to 1740 has biased composition (basic and acidic residues); sequence SNDRDSRGPSKPDNRK. Residues 1760-1882 enclose the MI domain; the sequence is KIEDDISMTL…PLNYLEEAYA (123 aa).

In Dictyostelium discoideum (Social amoeba), this protein is von Willebrand factor A domain-containing protein DDB_G0286969.